The following is a 159-amino-acid chain: Probable inactive acireductone dioxygenase 2 (159 aa).

This sequence belongs to the acireductone dioxygenase (ARD) family.

The protein localises to the cytoplasm. Its subcellular location is the nucleus. In terms of biological role, probable inactive acireductone dioxygenase. The sequence is that of Probable inactive acireductone dioxygenase 2 from Caenorhabditis briggsae.